The chain runs to 350 residues: Probable sugar phosphate/phosphate translocator At4g32390 (350 aa).

10 consecutive transmembrane segments (helical) span residues Ile-15 to Tyr-35, Phe-49 to Ile-69, Val-89 to Tyr-109, Val-112 to Leu-132, Met-146 to Trp-166, Val-168 to Leu-188, Val-205 to Leu-225, Phe-235 to Leu-255, Thr-263 to Ile-283, and Thr-286 to Asn-306. One can recognise an EamA domain in the interval Tyr-38 to Ile-155. Residues Gln-324–Asp-350 form a disordered region.

It belongs to the TPT transporter family. TPT (TC 2.A.7.9) subfamily.

The protein resides in the membrane. The polypeptide is Probable sugar phosphate/phosphate translocator At4g32390 (Arabidopsis thaliana (Mouse-ear cress)).